Here is a 486-residue protein sequence, read N- to C-terminus: Flavin-dependent monooxygenase pboD (486 aa).

Positions 51, 65, and 124 each coordinate FAD. The active site involves R203. D344 and G357 together coordinate FAD.

This sequence belongs to the paxM FAD-dependent monooxygenase family. It depends on FAD as a cofactor.

It functions in the pathway secondary metabolite biosynthesis. Its function is as follows. Flavin-dependent monooxygenase; part of the gene cluster that mediates the biosynthesis of protubonine B, a hydroxylated and diacetylated cyclo-L-Trp-L-Leu derivative. Within the pathway, pboD catalyzes the hydroxylation at C-3 of the indole ring of cyclo-L-Trp-L-Leu and subsequent formation of the pyrrolidine ring, eading to the production of protubonine D. PboD is also able to accept other cyclodipeptides (CDPs) as substrates, including cyclo-L-Trp-L-Trp, cyclo-L-Trp-L-Tyr, cyclo-L-Trp-L-Phe, cyclo-L-Trp-L-Met, cyclo-L-Trp-L-Ala, cyclo-L-Trp-L-Pro and cyclo-L-Trp-Gly. Assays with cyclo-L-Trp-L-Trp, cyclo-L-Trp-L-Tyr, cyclo-L-Trp-L-Phe show similar or even slightly higher conversion yields, compared with that of the natural substrate cyclo-L-Trp-L-Leu, whereas cyclo-L-Trp-L-Pro and cyclo-L-Trp-Gly are accepted by PboD but only with conversion yields of 10 and 4%, respectively. Cyclo-L-Trp-L-His is not accepted as a substrate. The first step of the protubonine B synthesis is performed by the nonribosomal peptide synthetase pboA that catalyzes the formation of cyclo-L-Trp-L-Leu by condensing L-Leu with L-Trp. The flavin-dependent monooxygenase pboD is responsible for hydroxylation at C-3 of the indole ring and subsequent formation of the pyrrolidine ring, leadind to protubonine D. Protubonine D is further diacetylated by two acetyltransferases, pboB and pboC, to form the final product protubonine B via protubonine C. The sequence is that of Flavin-dependent monooxygenase pboD from Aspergillus ustus.